We begin with the raw amino-acid sequence, 311 residues long: Aspartate carbamoyltransferase catalytic subunit (311 aa).

Carbamoyl phosphate is bound by residues R55 and T56. K85 lines the L-aspartate pocket. Carbamoyl phosphate-binding residues include R106, H135, and Q138. R168 and R230 together coordinate L-aspartate. L268 and P269 together coordinate carbamoyl phosphate.

This sequence belongs to the aspartate/ornithine carbamoyltransferase superfamily. ATCase family. Heterododecamer (2C3:3R2) of six catalytic PyrB chains organized as two trimers (C3), and six regulatory PyrI chains organized as three dimers (R2).

It catalyses the reaction carbamoyl phosphate + L-aspartate = N-carbamoyl-L-aspartate + phosphate + H(+). It participates in pyrimidine metabolism; UMP biosynthesis via de novo pathway; (S)-dihydroorotate from bicarbonate: step 2/3. In terms of biological role, catalyzes the condensation of carbamoyl phosphate and aspartate to form carbamoyl aspartate and inorganic phosphate, the committed step in the de novo pyrimidine nucleotide biosynthesis pathway. This is Aspartate carbamoyltransferase catalytic subunit from Salmonella arizonae (strain ATCC BAA-731 / CDC346-86 / RSK2980).